A 468-amino-acid chain; its full sequence is MSNGKITQVIGPVIDVEFEAGELPEIYYALKVSNPSLGDEPWNLVAEVAQHLGENTVRAIAMDSTDGLVRGQEVLNTGRQISVPVGRGTLGRILNVIGEPVDEQGPVETDTTWEIHRPTPEFVDQSTKVEAFETGIKVVDLLAPYARGGKIGLFGGAGVGKTVLIMELIHNIAKKHGGFSVFAGVGERTREGNDLWNEMKESNVLDKTALVYGQMNEPPGARARVALSALTVAEYFRDQENQDVLLFVDNIFRFTQAGSEVSALLGRIPSAVGYQPTLSTEMGELQERITTTKHGSITSVQAIYVPADDLTDPAPATTFAHLDATTVLSRQIAELGIYPAVDPLDSSSRILDPQVLGEEHYQVARDVQYVLQRYKDLQDIIAILGMDELSEEDKQTVSRARKIQRFLSQPFHVAEIFTGTPGKYVELSETIRGFKEIVEGKHDSVPEQAFYMAGGIDEVLENAAKMAS.

Position 155-162 (155-162 (GGAGVGKT)) interacts with ATP.

The protein belongs to the ATPase alpha/beta chains family. F-type ATPases have 2 components, CF(1) - the catalytic core - and CF(0) - the membrane proton channel. CF(1) has five subunits: alpha(3), beta(3), gamma(1), delta(1), epsilon(1). CF(0) has three main subunits: a(1), b(2) and c(9-12). The alpha and beta chains form an alternating ring which encloses part of the gamma chain. CF(1) is attached to CF(0) by a central stalk formed by the gamma and epsilon chains, while a peripheral stalk is formed by the delta and b chains.

It localises to the cell inner membrane. It catalyses the reaction ATP + H2O + 4 H(+)(in) = ADP + phosphate + 5 H(+)(out). Its function is as follows. Produces ATP from ADP in the presence of a proton gradient across the membrane. The catalytic sites are hosted primarily by the beta subunits. The protein is ATP synthase subunit beta 3 of Syntrophotalea carbinolica (strain DSM 2380 / NBRC 103641 / GraBd1) (Pelobacter carbinolicus).